We begin with the raw amino-acid sequence, 251 residues long: Small ribosomal subunit protein uS2 (251 aa).

This sequence belongs to the universal ribosomal protein uS2 family.

The chain is Small ribosomal subunit protein uS2 from Nitrosomonas europaea (strain ATCC 19718 / CIP 103999 / KCTC 2705 / NBRC 14298).